The chain runs to 197 residues: Stanniocalcin-2 (197 aa).

The interval 1-20 (TDAXNPPEGPQDRGSQQKGR) is disordered.

Belongs to the stanniocalcin family. As to quaternary structure, homodimer; disulfide-linked.

Its subcellular location is the secreted. Functionally, has an anti-hypocalcemic action on calcium and phosphate homeostasis. The sequence is that of Stanniocalcin-2 (STC2) from Cavia porcellus (Guinea pig).